The following is a 206-amino-acid chain: MLTIAMPKGRIFGEALELLRKAGYTLPPEFAESRKLMIEVPEENMRFILAKPMDVVTYVEHGVADLGIAGKDVMMEEERDVYELLDLKISKCHLAVAGLPGVRMNQIAPRVATKYPNIASSYFREQGEQVEIIRLNGSIELAPLIGLADRIVDIVSTGRTLKENGLVELEKIADVTSRLIVNPVSYRMKDEAVDELVHRLSEVIPQ.

This sequence belongs to the ATP phosphoribosyltransferase family. Short subfamily. Heteromultimer composed of HisG and HisZ subunits.

Its subcellular location is the cytoplasm. The catalysed reaction is 1-(5-phospho-beta-D-ribosyl)-ATP + diphosphate = 5-phospho-alpha-D-ribose 1-diphosphate + ATP. Its pathway is amino-acid biosynthesis; L-histidine biosynthesis; L-histidine from 5-phospho-alpha-D-ribose 1-diphosphate: step 1/9. Functionally, catalyzes the condensation of ATP and 5-phosphoribose 1-diphosphate to form N'-(5'-phosphoribosyl)-ATP (PR-ATP). Has a crucial role in the pathway because the rate of histidine biosynthesis seems to be controlled primarily by regulation of HisG enzymatic activity. The sequence is that of ATP phosphoribosyltransferase from Geobacillus sp. (strain WCH70).